Here is a 384-residue protein sequence, read N- to C-terminus: Succinyl-diaminopimelate desuccinylase (384 aa).

His73 contacts Zn(2+). Residue Asp75 is part of the active site. Asp106 contributes to the Zn(2+) binding site. The Proton acceptor role is filled by Glu140. Glu141, Glu169, and His358 together coordinate Zn(2+).

The protein belongs to the peptidase M20A family. DapE subfamily. Homodimer. Zn(2+) is required as a cofactor. Requires Co(2+) as cofactor.

It carries out the reaction N-succinyl-(2S,6S)-2,6-diaminopimelate + H2O = (2S,6S)-2,6-diaminopimelate + succinate. It functions in the pathway amino-acid biosynthesis; L-lysine biosynthesis via DAP pathway; LL-2,6-diaminopimelate from (S)-tetrahydrodipicolinate (succinylase route): step 3/3. Its function is as follows. Catalyzes the hydrolysis of N-succinyl-L,L-diaminopimelic acid (SDAP), forming succinate and LL-2,6-diaminopimelate (DAP), an intermediate involved in the bacterial biosynthesis of lysine and meso-diaminopimelic acid, an essential component of bacterial cell walls. This is Succinyl-diaminopimelate desuccinylase from Pelagibacter ubique (strain HTCC1062).